We begin with the raw amino-acid sequence, 163 residues long: 6,7-dimethyl-8-ribityllumazine synthase (163 aa).

5-amino-6-(D-ribitylamino)uracil is bound by residues F27, 58–60 (ALE), and 87–89 (CVV). 92–93 (DT) is a (2S)-2-hydroxy-3-oxobutyl phosphate binding site. H95 (proton donor) is an active-site residue. N120 lines the 5-amino-6-(D-ribitylamino)uracil pocket. R134 is a (2S)-2-hydroxy-3-oxobutyl phosphate binding site.

The protein belongs to the DMRL synthase family.

The enzyme catalyses (2S)-2-hydroxy-3-oxobutyl phosphate + 5-amino-6-(D-ribitylamino)uracil = 6,7-dimethyl-8-(1-D-ribityl)lumazine + phosphate + 2 H2O + H(+). The protein operates within cofactor biosynthesis; riboflavin biosynthesis; riboflavin from 2-hydroxy-3-oxobutyl phosphate and 5-amino-6-(D-ribitylamino)uracil: step 1/2. Catalyzes the formation of 6,7-dimethyl-8-ribityllumazine by condensation of 5-amino-6-(D-ribitylamino)uracil with 3,4-dihydroxy-2-butanone 4-phosphate. This is the penultimate step in the biosynthesis of riboflavin. This is 6,7-dimethyl-8-ribityllumazine synthase from Nitrobacter winogradskyi (strain ATCC 25391 / DSM 10237 / CIP 104748 / NCIMB 11846 / Nb-255).